The following is a 188-amino-acid chain: Elongation factor P-like protein (188 aa).

It belongs to the elongation factor P family.

The polypeptide is Elongation factor P-like protein (Xylella fastidiosa (strain M12)).